The chain runs to 261 residues: Pantothenate synthetase (261 aa).

29 to 36 (MGALHNGH) lines the ATP pocket. Residue His36 is the Proton donor of the active site. Gln60 contributes to the (R)-pantoate binding site. Gln60 provides a ligand contact to beta-alanine. ATP is bound at residue 147–150 (GEKD). Gln153 contributes to the (R)-pantoate binding site. 184–187 (LSSR) contacts ATP.

The protein belongs to the pantothenate synthetase family. In terms of assembly, homodimer.

It localises to the cytoplasm. The enzyme catalyses (R)-pantoate + beta-alanine + ATP = (R)-pantothenate + AMP + diphosphate + H(+). It participates in cofactor biosynthesis; (R)-pantothenate biosynthesis; (R)-pantothenate from (R)-pantoate and beta-alanine: step 1/1. Catalyzes the condensation of pantoate with beta-alanine in an ATP-dependent reaction via a pantoyl-adenylate intermediate. This is Pantothenate synthetase from Francisella tularensis subsp. tularensis (strain FSC 198).